A 1203-amino-acid polypeptide reads, in one-letter code: DNA-directed RNA polymerase subunit beta' (1203 aa).

Residues Cys60, Cys62, Cys75, and Cys78 each contribute to the Zn(2+) site. Mg(2+) contacts are provided by Asp449, Asp451, and Asp453. The Zn(2+) site is built by Cys818, Cys892, Cys899, and Cys902.

It belongs to the RNA polymerase beta' chain family. The RNAP catalytic core consists of 2 alpha, 1 beta, 1 beta' and 1 omega subunit. When a sigma factor is associated with the core the holoenzyme is formed, which can initiate transcription. Requires Mg(2+) as cofactor. It depends on Zn(2+) as a cofactor.

It carries out the reaction RNA(n) + a ribonucleoside 5'-triphosphate = RNA(n+1) + diphosphate. DNA-dependent RNA polymerase catalyzes the transcription of DNA into RNA using the four ribonucleoside triphosphates as substrates. The chain is DNA-directed RNA polymerase subunit beta' from Bacillus cereus (strain ZK / E33L).